The following is an 899-amino-acid chain: Probable disease resistance protein RXW24L (899 aa).

Residues 13-50 are a coiled coil; sequence DRLSQEYDQFKGVEDQVTELKSNLNLLKSFLKDADAKK. Residues 143–455 enclose the NB-ARC domain; that stretch reads LQERQREMRH…AEGISERRRY (313 aa). 189–196 contributes to the ATP binding site; the sequence is GMGGLGKT.

Belongs to the disease resistance NB-LRR family.

In terms of biological role, potential disease resistance protein. The sequence is that of Probable disease resistance protein RXW24L (RXW24L) from Arabidopsis thaliana (Mouse-ear cress).